A 440-amino-acid chain; its full sequence is 26S proteasome regulatory subunit 4 (440 aa).

Positions 1-13 are enriched in gly residues; sequence MGQSQSGGHGPGG. The tract at residues 1 to 49 is disordered; that stretch reads MGQSQSGGHGPGGGKKDDKDKKKKYEPPVPTRVGKKKKKTKGPDAASKL. Residue Gly2 is the site of N-myristoyl glycine attachment. Ser4 carries the phosphoserine modification. Residues 14-26 are compositionally biased toward basic and acidic residues; sequence GKKDDKDKKKKYE. Thr53 is modified (phosphothreonine). Residues 84 to 104 are disordered; that stretch reads QMKPLEEKQEEERSKVDDLRG. Positions 86–103 are enriched in basic and acidic residues; that stretch reads KPLEEKQEEERSKVDDLR. Position 226-233 (226-233) interacts with ATP; it reads GPPGTGKT. Residue Lys237 forms a Glycyl lysine isopeptide (Lys-Gly) (interchain with G-Cter in ubiquitin) linkage. N6-acetyllysine is present on Lys258. The residue at position 434 (Thr434) is a Phosphothreonine. At Tyr439 the chain carries Phosphotyrosine.

This sequence belongs to the AAA ATPase family. Component of the 19S proteasome regulatory particle complex. The 26S proteasome consists of a 20S core particle (CP) and two 19S regulatory subunits (RP). The regulatory particle is made of a lid composed of 9 subunits, a base containing 6 ATPases including PSMC1 and few additional components. Interacts with SCA7. Interacts with NGLY1. Interacts with PAAF1.

The protein localises to the cytoplasm. Its subcellular location is the nucleus. It localises to the membrane. Component of the 26S proteasome, a multiprotein complex involved in the ATP-dependent degradation of ubiquitinated proteins. This complex plays a key role in the maintenance of protein homeostasis by removing misfolded or damaged proteins, which could impair cellular functions, and by removing proteins whose functions are no longer required. Therefore, the proteasome participates in numerous cellular processes, including cell cycle progression, apoptosis, or DNA damage repair. PSMC1 belongs to the heterohexameric ring of AAA (ATPases associated with diverse cellular activities) proteins that unfolds ubiquitinated target proteins that are concurrently translocated into a proteolytic chamber and degraded into peptides. This is 26S proteasome regulatory subunit 4 (PSMC1) from Homo sapiens (Human).